A 244-amino-acid polypeptide reads, in one-letter code: Adiponectin (244 aa).

The signal sequence occupies residues 1–18 (MLLLGAVLLLLALPGHDQ). O-linked (GalNAc...) threonine glycosylation is found at Thr21 and Thr22. Lys33 is modified (5-hydroxylysine). Cys36 carries the post-translational modification S-(2-succinyl)cysteine. Residues 40–101 (MAGIPGHPGH…RGFPGIQGRK (62 aa)) form a disordered region. The Collagen-like domain maps to 42 to 107 (GIPGHPGHNG…QGRKGEPGEG (66 aa)). A 4-hydroxyproline mark is found at Pro44, Pro47, and Pro53. A compositionally biased stretch (basic and acidic residues) spans 55 to 70 (RDGRDGTPGEKGEKGD). 5-hydroxylysine is present on residues Lys65 and Lys68. Lys65 and Lys68 each carry an O-linked (Gal...) hydroxylysine; partial glycan. Residues Pro71 and Pro76 each carry the 4-hydroxyproline; partial modification. The residue at position 77 (Lys77) is a 5-hydroxylysine. Lys77 carries O-linked (Gal...) hydroxylysine; partial glycosylation. At Pro91 the chain carries 4-hydroxyproline. At Pro95 the chain carries 4-hydroxyproline; partial. Lys101 is modified (5-hydroxylysine). Lys101 carries O-linked (Gal...) hydroxylysine; partial glycosylation. The region spanning 108-244 (AYVYRSAFSV…TGFLLYHDTN (137 aa)) is the C1q domain.

In terms of assembly, homomultimer. Forms trimers, hexamers and 12- to 18-mers. The trimers (low molecular weight complexes / LMW) are assembled via non-covalent interactions of the collagen-like domains in a triple helix and hydrophobic interactions within the globular C1q domain. Several trimers can associate to form disulfide-linked hexamers (middle molecular weight complexes / MMW) and larger complexes (higher molecular weight / HMW). The HMW-complex assembly is also modulated by the degree of lysine hydroxylation and glycosylation. LMW, MMW and HMW complexes bind to HBEGF, MMW and HMW complexes bind to PDGFB, and HMW complex binds to FGF2. Interacts with CTRP9 via the C1q domain (heterotrimeric complex). HMW complexes are more extensively glycosylated than smaller oligomers. Hydroxylation and glycosylation of the lysine residues within the collagen-like domain of adiponectin seem to be critically involved in regulating the formation and/or secretion of HMW complexes and consequently contribute to the insulin-sensitizing activity of adiponectin in hepatocytes. Post-translationally, O-glycosylated. Not N-glycosylated. O-linked glycans on hydroxylysines consist of Glc-Gal disaccharides bound to the oxygen atom of post-translationally added hydroxyl groups. Sialylated to varying degrees depending on tissue. Thr-22 appears to be the major site of sialylation. Higher sialylation found in SGBS adipocytes than in HEK fibroblasts. Sialylation is not required neither for heterodimerization nor for secretion. Not sialylated on the glycosylated hydroxylysines. Desialylated forms are rapidly cleared from the circulation. In terms of processing, succination of Cys-36 by the Krebs cycle intermediate fumarate, which leads to S-(2-succinyl)cysteine residues, inhibits polymerization and secretion of adiponectin. Adiponectin is a major target for succination in both adipocytes and adipose tissue of diabetic mammals. It was proposed that succination of proteins is a biomarker of mitochondrial stress and accumulation of Krebs cycle intermediates in adipose tissue in diabetes and that succination of adiponectin may contribute to the decrease in plasma adiponectin in diabetes. Synthesized exclusively by adipocytes and secreted into plasma.

Its subcellular location is the secreted. Polymerization and secretion of adiponectin is inhibited by succination of cysteine residues by the Krebs cycle intermediate fumarate, which leads to S-(2-succinyl)cysteine residues. Its function is as follows. Important adipokine involved in the control of fat metabolism and insulin sensitivity, with direct anti-diabetic, anti-atherogenic and anti-inflammatory activities. Stimulates AMPK phosphorylation and activation in the liver and the skeletal muscle, enhancing glucose utilization and fatty-acid combustion. Antagonizes TNF-alpha by negatively regulating its expression in various tissues such as liver and macrophages, and also by counteracting its effects. Inhibits endothelial NF-kappa-B signaling through a cAMP-dependent pathway. May play a role in cell growth, angiogenesis and tissue remodeling by binding and sequestering various growth factors with distinct binding affinities, depending on the type of complex, LMW, MMW or HMW. This is Adiponectin (ADIPOQ) from Homo sapiens (Human).